A 31-amino-acid chain; its full sequence is Photosystem II reaction center protein T (31 aa).

The chain crosses the membrane as a helical span at residues 3–23 (SFAYILILAFSIGTLFFAIAL).

Belongs to the PsbT family. As to quaternary structure, PSII is composed of 1 copy each of membrane proteins PsbA, PsbB, PsbC, PsbD, PsbE, PsbF, PsbH, PsbI, PsbJ, PsbK, PsbL, PsbM, PsbT, PsbX, PsbY, PsbZ, Psb30/Ycf12, peripheral proteins PsbO, CyanoQ (PsbQ), PsbU, PsbV and a large number of cofactors. It forms dimeric complexes.

It is found in the cellular thylakoid membrane. Its function is as follows. Found at the monomer-monomer interface of the photosystem II (PS II) dimer, plays a role in assembly and dimerization of PSII. PSII is a light-driven water plastoquinone oxidoreductase, using light energy to abstract electrons from H(2)O, generating a proton gradient subsequently used for ATP formation. The chain is Photosystem II reaction center protein T from Synechococcus sp. (strain RCC307).